A 560-amino-acid chain; its full sequence is Factor VII-activating protease (560 aa).

A signal peptide spans 1-23; it reads MFARMSDLHVLLLMALVGKTACG. The N-linked (GlcNAc...) asparagine glycan is linked to Asn-54. EGF-like domains lie at 73 to 109, 111 to 148, and 150 to 188; these read QADPCQPNPCEHGGDCLVHGSTFTCSCLAPFSGNKCQ, VQNTCKDNPCGRGQCLITQSPPYYRCVCKHPYTGPSCS, and VVPVCRPNPCQNGATCSRHKRRSKFTCACPDQFKGKFCE. 18 disulfides stabilise this stretch: Cys-77–Cys-88, Cys-82–Cys-97, Cys-99–Cys-108, Cys-115–Cys-125, Cys-120–Cys-136, Cys-138–Cys-147, Cys-154–Cys-165, Cys-159–Cys-176, Cys-178–Cys-187, Cys-194–Cys-276, Cys-215–Cys-257, Cys-246–Cys-271, Cys-301–Cys-435, Cys-347–Cys-363, Cys-355–Cys-424, Cys-447–Cys-515, Cys-477–Cys-493, and Cys-505–Cys-533. The region spanning 193-276 is the Kringle domain; sequence DCYVGDGYSY…KWEYCDVSAC (84 aa). Asn-207 carries an N-linked (GlcNAc...) asparagine glycan. The Peptidase S1 domain occupies 314 to 555; sequence IYGGFKSTAG…FLNWIKATIK (242 aa). Residues His-362 and Asp-411 each act as charge relay system in the active site. The Charge relay system role is filled by Ser-509.

This sequence belongs to the peptidase S1 family. In terms of assembly, heterodimer; disulfide-linked. Heterodimer of a 50 kDa heavy and a 27 kDa light chain linked by a disulfide bond. In terms of processing, proteolytic cleavage at Gly-23 or Met-27 can give rise to the 50 kDa heavy chain (HC) and cleavage at Arg-313 or Lys-319 can give rise to the 27 kDa light chain (LC). The HC can undergo further proteolytic cleavage giving rise to a 26 kDa fragment. The LC can undergo further proteolytic cleavage at Arg-313 leading to a 17-kDa fragment and at Arg-480 leading to a 8-kDa fragment. As to expression, ubiquitously expressed.

It localises to the secreted. Functionally, cleaves the alpha-chain at multiple sites and the beta-chain between 'Lys-53' and 'Lys-54' but not the gamma-chain of fibrinogen and therefore does not initiate the formation of the fibrin clot and does not cause the fibrinolysis directly. It does not cleave (activate) prothrombin and plasminogen but converts the inactive single chain urinary plasminogen activator (pro-urokinase) to the active two chain form. Activates coagulation factor VII. May function as a tumor suppressor negatively regulating cell proliferation and cell migration. The protein is Factor VII-activating protease of Homo sapiens (Human).